Consider the following 253-residue polypeptide: 5'/3'-nucleotidase SurE (253 aa).

A divalent metal cation-binding residues include aspartate 8, aspartate 9, serine 39, and asparagine 92.

Belongs to the SurE nucleotidase family. A divalent metal cation is required as a cofactor.

It is found in the cytoplasm. The enzyme catalyses a ribonucleoside 5'-phosphate + H2O = a ribonucleoside + phosphate. It carries out the reaction a ribonucleoside 3'-phosphate + H2O = a ribonucleoside + phosphate. The catalysed reaction is [phosphate](n) + H2O = [phosphate](n-1) + phosphate + H(+). In terms of biological role, nucleotidase with a broad substrate specificity as it can dephosphorylate various ribo- and deoxyribonucleoside 5'-monophosphates and ribonucleoside 3'-monophosphates with highest affinity to 3'-AMP. Also hydrolyzes polyphosphate (exopolyphosphatase activity) with the preference for short-chain-length substrates (P20-25). Might be involved in the regulation of dNTP and NTP pools, and in the turnover of 3'-mononucleotides produced by numerous intracellular RNases (T1, T2, and F) during the degradation of various RNAs. In Shigella flexneri serotype 5b (strain 8401), this protein is 5'/3'-nucleotidase SurE.